The sequence spans 184 residues: NADH-quinone oxidoreductase subunit B (184 aa).

[4Fe-4S] cluster contacts are provided by cysteine 37, cysteine 38, cysteine 103, and cysteine 132.

The protein belongs to the complex I 20 kDa subunit family. In terms of assembly, NDH-1 is composed of 14 different subunits. Subunits NuoB, C, D, E, F, and G constitute the peripheral sector of the complex. The cofactor is [4Fe-4S] cluster.

It is found in the cell membrane. The enzyme catalyses a quinone + NADH + 5 H(+)(in) = a quinol + NAD(+) + 4 H(+)(out). In terms of biological role, NDH-1 shuttles electrons from NADH, via FMN and iron-sulfur (Fe-S) centers, to quinones in the respiratory chain. The immediate electron acceptor for the enzyme in this species is believed to be a menaquinone. Couples the redox reaction to proton translocation (for every two electrons transferred, four hydrogen ions are translocated across the cytoplasmic membrane), and thus conserves the redox energy in a proton gradient. This chain is NADH-quinone oxidoreductase subunit B, found in Mycolicibacterium smegmatis (strain ATCC 700084 / mc(2)155) (Mycobacterium smegmatis).